The chain runs to 62 residues: Large ribosomal subunit protein bL33 (62 aa).

This sequence belongs to the bacterial ribosomal protein bL33 family.

In Phocaeicola vulgatus (strain ATCC 8482 / DSM 1447 / JCM 5826 / CCUG 4940 / NBRC 14291 / NCTC 11154) (Bacteroides vulgatus), this protein is Large ribosomal subunit protein bL33.